We begin with the raw amino-acid sequence, 370 residues long: Prolactin-releasing peptide receptor (370 aa).

Topologically, residues 1 to 62 are extracellular; it reads MASLPTQGPA…LQLVHQLKGL (62 aa). Residues Asn27 and Asn36 are each glycosylated (N-linked (GlcNAc...) asparagine). Residues 63-83 traverse the membrane as a helical segment; the sequence is IVLLYSIVVVVGLVGNCLLVL. The Cytoplasmic segment spans residues 84-101; that stretch reads VIARVRRLHNVTNFLIGN. Residues 102–122 form a helical membrane-spanning segment; the sequence is LALSDVLMCTACVPLTLAYAF. Topologically, residues 123–126 are extracellular; the sequence is EPRG. A helical membrane pass occupies residues 127–147; it reads WVFGGGLCHLVFFLQPVTVYV. An intrachain disulfide couples Cys134 to Cys211. The Cytoplasmic segment spans residues 148–175; the sequence is SVFTLTTIAVDRYVVLVHPLRRRISLRF. Residues 176 to 196 form a helical membrane-spanning segment; sequence SAYAVLAIWALSAVLALPAAL. Over 197 to 225 the chain is Extracellular; sequence HTYHVELKPHRVRLCEEFWGSQERQRQLY. The chain crosses the membrane as a helical span at residues 226–246; it reads AWGLLLVTYLLPLLVILLSYV. The Cytoplasmic portion of the chain corresponds to 247–276; it reads RVSVNLRNRVVPGCVTQSQADWDRARRRRT. A helical transmembrane segment spans residues 277–297; it reads FCLLVVVVVVFAVCWLPLHVF. Residues 298 to 317 are Extracellular-facing; the sequence is NLLRDLDPHAIDPYAFGLVQ. The chain crosses the membrane as a helical span at residues 318 to 338; it reads LLCHWLAMSSACYNPFIYAWL. The Cytoplasmic segment spans residues 339-369; the sequence is HDSFREELRKLLLAWPRKIAPHGQSMTVSVV. A required for interaction with GRIP1, GRIP2 and PICK1 region spans residues 365 to 370; the sequence is TVSVVI.

The protein belongs to the G-protein coupled receptor 1 family. In terms of assembly, interacts through its C-terminal region with the PDZ domain-containing proteins GRIP1, GRIP2 and PICK1. Interacts with PDZ domains 4 and 5 of GRIP1 and with the PDZ domain of PICK1.

It localises to the cell membrane. Its function is as follows. Receptor for prolactin-releasing peptide (PrRP). Implicated in lactation, regulation of food intake and pain-signal processing. This Bos taurus (Bovine) protein is Prolactin-releasing peptide receptor (PRLHR).